The chain runs to 197 residues: Imidazoleglycerol-phosphate dehydratase (197 aa).

This sequence belongs to the imidazoleglycerol-phosphate dehydratase family.

It localises to the cytoplasm. The catalysed reaction is D-erythro-1-(imidazol-4-yl)glycerol 3-phosphate = 3-(imidazol-4-yl)-2-oxopropyl phosphate + H2O. It participates in amino-acid biosynthesis; L-histidine biosynthesis; L-histidine from 5-phospho-alpha-D-ribose 1-diphosphate: step 6/9. The polypeptide is Imidazoleglycerol-phosphate dehydratase (Teredinibacter turnerae (strain ATCC 39867 / T7901)).